The chain runs to 141 residues: Nucleoside diphosphate kinase (141 aa).

Positions 11, 59, 87, 93, 104, and 114 each coordinate ATP. His-117 serves as the catalytic Pros-phosphohistidine intermediate.

It belongs to the NDK family. In terms of assembly, homotetramer. The cofactor is Mg(2+).

Its subcellular location is the cytoplasm. The enzyme catalyses a 2'-deoxyribonucleoside 5'-diphosphate + ATP = a 2'-deoxyribonucleoside 5'-triphosphate + ADP. The catalysed reaction is a ribonucleoside 5'-diphosphate + ATP = a ribonucleoside 5'-triphosphate + ADP. Major role in the synthesis of nucleoside triphosphates other than ATP. The ATP gamma phosphate is transferred to the NDP beta phosphate via a ping-pong mechanism, using a phosphorylated active-site intermediate. The polypeptide is Nucleoside diphosphate kinase (Cupriavidus taiwanensis (strain DSM 17343 / BCRC 17206 / CCUG 44338 / CIP 107171 / LMG 19424 / R1) (Ralstonia taiwanensis (strain LMG 19424))).